A 516-amino-acid polypeptide reads, in one-letter code: High-affinity nitrate transporter 2.3 (516 aa).

A run of 12 helical transmembrane segments spans residues 52 to 72 (WFSF…LPLI), 76 to 96 (LGLT…GAVF), 112 to 132 (LASA…SIIQ), 142 to 162 (FFTG…SSMF), 172 to 192 (GVAG…MPLV), 209 to 229 (IAFF…LAFG), 265 to 285 (WILA…DNVV), 299 to 319 (TAGL…PGGG), 335 to 354 (LWGL…VLGI), 367 to 387 (VLFS…VPFV), 395 to 415 (ISGM…YIFF), and 425 to 445 (GIKY…LIYF). A disordered region spans residues 489 to 516 (SVREGGRSSANGGQPRHTVPVDASPAGV).

Belongs to the major facilitator superfamily. Nitrate/nitrite porter (TC 2.A.1.8) family. In terms of assembly, heterotetramer composed of two NRT2.3 and two NAR2.1. Isoform 1 interacts with NAR2.1, but not isoform 2. Expressed in the stelar cells of both primary and lateral roots, particularly at the site of lateral root emergence, root-shoot junction zone, vascular tissues of adventitious root primordia, leaves, germ tips and seed scutellum.

The protein localises to the cell membrane. Functionally, involved in nitrate transport, but does not seem to be able to mediate transport by its own. Acts as a dual component transporter with NAR2.1. Imports nitrate with high affinity when expressed with NAR2.1 in a heterologous system (Xenopus oocytes). Plays a key role in long-distance nitrate transport from root to shoot particularly at low external nitrate supply. The chain is High-affinity nitrate transporter 2.3 (NRT2.3) from Oryza sativa subsp. japonica (Rice).